We begin with the raw amino-acid sequence, 240 residues long: Urease accessory protein UreF (240 aa).

Belongs to the UreF family. In terms of assembly, ureD, UreF and UreG form a complex that acts as a GTP-hydrolysis-dependent molecular chaperone, activating the urease apoprotein by helping to assemble the nickel containing metallocenter of UreC. The UreE protein probably delivers the nickel.

It is found in the cytoplasm. Functionally, required for maturation of urease via the functional incorporation of the urease nickel metallocenter. In Bradyrhizobium sp. (strain BTAi1 / ATCC BAA-1182), this protein is Urease accessory protein UreF.